The primary structure comprises 397 residues: uncharacterized protein (397 aa).

A run of 4 helical transmembrane segments spans residues 142–162 (WETIGTFTVSGLLVAVSVGIA), 191–211 (SQLLFEHPFMALGLIFGSVVL), 242–258 (ALTGMVSLLALSGTYFL), and 260–280 (APWLDPFFGCLVSIVVFSAGF).

Belongs to the cation diffusion facilitator (CDF) transporter (TC 2.A.4) family. SLC30A subfamily.

Its subcellular location is the membrane. This is an uncharacterized protein from Schizosaccharomyces pombe (strain 972 / ATCC 24843) (Fission yeast).